Reading from the N-terminus, the 241-residue chain is Proteasome subunit beta type-1 (241 aa).

Residue Met1 is modified to N-acetylmethionine. Positions 1 to 28 (MLSSTAMYSAPGRDLGMEPHRAAGPLQL) are excised as a propeptide. A glycan (O-linked (GlcNAc) serine) is linked at Ser58. Phosphoserine occurs at positions 62 and 68. Tyr150 carries the phosphotyrosine modification. Ser162 bears the Phosphoserine mark. An N6-acetyllysine modification is found at Lys204. Ser209 carries an O-linked (GlcNAc) serine glycan.

The protein belongs to the peptidase T1B family. As to quaternary structure, the 26S proteasome consists of a 20S proteasome core and two 19S regulatory subunits. The 20S proteasome core is a barrel-shaped complex made of 28 subunits that are arranged in four stacked rings. The two outer rings are each formed by seven alpha subunits, and the two inner rings are formed by seven beta subunits. The proteolytic activity is exerted by three beta-subunits PSMB5, PSMB6 and PSMB7. Interacts with SERPINB2. Interacts with RFPL4A. (Microbial infection) Interacts with HIV-1 protein Tat.

The protein resides in the cytoplasm. It is found in the nucleus. In terms of biological role, non-catalytic component of the 20S core proteasome complex involved in the proteolytic degradation of most intracellular proteins. This complex plays numerous essential roles within the cell by associating with different regulatory particles. Associated with two 19S regulatory particles, forms the 26S proteasome and thus participates in the ATP-dependent degradation of ubiquitinated proteins. The 26S proteasome plays a key role in the maintenance of protein homeostasis by removing misfolded or damaged proteins that could impair cellular functions, and by removing proteins whose functions are no longer required. Associated with the PA200 or PA28, the 20S proteasome mediates ubiquitin-independent protein degradation. This type of proteolysis is required in several pathways including spermatogenesis (20S-PA200 complex) or generation of a subset of MHC class I-presented antigenic peptides (20S-PA28 complex). The sequence is that of Proteasome subunit beta type-1 from Homo sapiens (Human).